A 415-amino-acid chain; its full sequence is Ribulose bisphosphate carboxylase large chain (415 aa).

The substrate site is built by Asn101 and Thr151. The Proton acceptor role is filled by Lys153. Position 155 (Lys155) interacts with substrate. Mg(2+)-binding residues include Lys179, Asp181, and Glu182. Lys179 carries the N6-carboxylysine modification. His272 (proton acceptor) is an active-site residue. 3 residues coordinate substrate: Arg273, His305, and Ser357.

It belongs to the RuBisCO large chain family. Type I subfamily. Heterohexadecamer of 8 large chains and 8 small chains; disulfide-linked. The disulfide link is formed within the large subunit homodimers. The cofactor is Mg(2+). The disulfide bond which can form in the large chain dimeric partners within the hexadecamer appears to be associated with oxidative stress and protein turnover.

It is found in the plastid. The protein localises to the chloroplast. The enzyme catalyses 2 (2R)-3-phosphoglycerate + 2 H(+) = D-ribulose 1,5-bisphosphate + CO2 + H2O. It catalyses the reaction D-ribulose 1,5-bisphosphate + O2 = 2-phosphoglycolate + (2R)-3-phosphoglycerate + 2 H(+). Functionally, ruBisCO catalyzes two reactions: the carboxylation of D-ribulose 1,5-bisphosphate, the primary event in carbon dioxide fixation, as well as the oxidative fragmentation of the pentose substrate in the photorespiration process. Both reactions occur simultaneously and in competition at the same active site. This Cibotium barometz (Scythian lamb) protein is Ribulose bisphosphate carboxylase large chain.